The chain runs to 207 residues: Small ribosomal subunit protein uS4c (207 aa).

The 65-residue stretch at 92-156 (MRLDNILFRL…YQSIITKRIE (65 aa)) folds into the S4 RNA-binding domain.

It belongs to the universal ribosomal protein uS4 family. As to quaternary structure, part of the 30S ribosomal subunit. Contacts protein S5. The interaction surface between S4 and S5 is involved in control of translational fidelity.

It localises to the plastid. The protein resides in the chloroplast. In terms of biological role, one of the primary rRNA binding proteins, it binds directly to 16S rRNA where it nucleates assembly of the body of the 30S subunit. Functionally, with S5 and S12 plays an important role in translational accuracy. The polypeptide is Small ribosomal subunit protein uS4c (rps4) (Equisetum palustre (Marsh horsetail)).